We begin with the raw amino-acid sequence, 232 residues long: Clarin-2 (232 aa).

The chain crosses the membrane as a helical span at residues 10–30 (YGLASLLSFSSFILIIVALVV). Asn48 is a glycosylation site (N-linked (GlcNAc...) asparagine). 3 helical membrane-spanning segments follow: residues 101 to 121 (ILLL…FAIL), 139 to 159 (LWNV…VAAV), and 188 to 208 (SFWI…VVAI).

It belongs to the clarin family.

It localises to the cell projection. The protein resides in the stereocilium membrane. In terms of biological role, plays a key role to hearing function. Required for normal organization and maintenance of the stereocilia bundle and for mechano-electrical transduction. This Homo sapiens (Human) protein is Clarin-2.